A 311-amino-acid chain; its full sequence is Acetyl-coenzyme A carboxylase carboxyl transferase subunit beta (311 aa).

Residues 27–296 (LWTKCGHCSA…AEAADAPEAG (270 aa)) form the CoA carboxyltransferase N-terminal domain. Zn(2+) contacts are provided by cysteine 31, cysteine 34, cysteine 50, and cysteine 53. The C4-type zinc-finger motif lies at 31 to 53 (CGHCSAVLYRPELERNQEVCPKC). The span at 286-299 (AAEAADAPEAGEQP) shows a compositional bias: low complexity. The disordered stretch occupies residues 286–311 (AAEAADAPEAGEQPSEATDPVGEHWD).

It belongs to the AccD/PCCB family. In terms of assembly, acetyl-CoA carboxylase is a heterohexamer composed of biotin carboxyl carrier protein (AccB), biotin carboxylase (AccC) and two subunits each of ACCase subunit alpha (AccA) and ACCase subunit beta (AccD). Requires Zn(2+) as cofactor.

Its subcellular location is the cytoplasm. It catalyses the reaction N(6)-carboxybiotinyl-L-lysyl-[protein] + acetyl-CoA = N(6)-biotinyl-L-lysyl-[protein] + malonyl-CoA. The protein operates within lipid metabolism; malonyl-CoA biosynthesis; malonyl-CoA from acetyl-CoA: step 1/1. Its function is as follows. Component of the acetyl coenzyme A carboxylase (ACC) complex. Biotin carboxylase (BC) catalyzes the carboxylation of biotin on its carrier protein (BCCP) and then the CO(2) group is transferred by the transcarboxylase to acetyl-CoA to form malonyl-CoA. The protein is Acetyl-coenzyme A carboxylase carboxyl transferase subunit beta of Alkalilimnicola ehrlichii (strain ATCC BAA-1101 / DSM 17681 / MLHE-1).